The sequence spans 258 residues: Isoprenyl transferase 2 (258 aa).

Residues 1-18 (MNFPPIHPSTPKMTPPDL) are compositionally biased toward pro residues. The tract at residues 1 to 21 (MNFPPIHPSTPKMTPPDLDPQ) is disordered. The active site involves Asp32. Asp32 serves as a coordination point for Mg(2+). Residues 33 to 36 (GNGR), Trp37, Arg45, His49, and 77 to 79 (STE) each bind substrate. The active-site Proton acceptor is the Asn80. Substrate is bound by residues Trp81, Arg83, Arg200, and 206–208 (RLS). Glu219 contributes to the Mg(2+) binding site.

This sequence belongs to the UPP synthase family. In terms of assembly, homodimer. It depends on Mg(2+) as a cofactor.

Functionally, catalyzes the condensation of isopentenyl diphosphate (IPP) with allylic pyrophosphates generating different type of terpenoids. The sequence is that of Isoprenyl transferase 2 from Nostoc sp. (strain PCC 7120 / SAG 25.82 / UTEX 2576).